Here is a 416-residue protein sequence, read N- to C-terminus: UDP-N-acetylmuramoylalanine--D-glutamate ligase (416 aa).

An ATP-binding site is contributed by 104–110 (GSNGKST).

Belongs to the MurCDEF family.

It localises to the cytoplasm. It carries out the reaction UDP-N-acetyl-alpha-D-muramoyl-L-alanine + D-glutamate + ATP = UDP-N-acetyl-alpha-D-muramoyl-L-alanyl-D-glutamate + ADP + phosphate + H(+). It functions in the pathway cell wall biogenesis; peptidoglycan biosynthesis. Functionally, cell wall formation. Catalyzes the addition of glutamate to the nucleotide precursor UDP-N-acetylmuramoyl-L-alanine (UMA). In Francisella tularensis subsp. holarctica (strain FTNF002-00 / FTA), this protein is UDP-N-acetylmuramoylalanine--D-glutamate ligase.